The chain runs to 228 residues: SKA complex subunit 2 (228 aa).

It belongs to the SKA2 family. In terms of assembly, component of the SKA complex, composed of ska1, ska2 and ska3.

It localises to the cytoplasm. Its subcellular location is the cytoskeleton. The protein resides in the spindle. It is found in the chromosome. The protein localises to the centromere. It localises to the kinetochore. Its function is as follows. Component of the SKA complex, a microtubule plus end-binding complex of the outer kinetochore that stabilizes spindle microtubule-kinetochore attachments, promotes alignment of chromosomes at the mitotic spindle equator (chromosome congression) and assists suppression of the spindle assembly checkpoint. Kinetochores, consisting of a centromere-associated inner segment and a microtubule-contacting outer segment, play a crucial role in chromosome segregation by mediating the physical connection between centromeric DNA and spindle microtubules. The outer kinetochore is made up of the ten-subunit KMN network complex, comprising the MIS12, NDC80 and KNL1 complexes, and auxiliary microtubule-associated components such as the SKA complex; together they connect the outer kinetochore with the inner kinetochore, bind microtubules, and mediate interactions with mitotic checkpoint proteins that delay anaphase until chromosomes are bioriented on the spindle. The SKA complex is loaded onto bioriented kinetochores and it facilitates chromosome congression by stabilizing microtubules together with MAPRE1, and end-on attachment of the NDC80 complex to depolymerizing spindle microtubules, thereby assisting the poleward-moving kinetochore in withstanding microtubule pulling forces. The complex associates with dynamic microtubule plus-ends and can track both depolymerizing and elongating microtubules. The complex recruits protein phosphatase 1 (PP1) to the kinetochore in prometaphase and metaphase, to oppose spindle assembly checkpoint signaling and promote the onset of anaphase. Binds directly to microtubules; but with a much lower affinity than SKA1. During meiosis the SKA complex stabilizes the meiotic spindle and is required for its migration to the cortex. The chain is SKA complex subunit 2 (ska2) from Salmo salar (Atlantic salmon).